Consider the following 210-residue polypeptide: Superoxide dismutase [Mn], mitochondrial (210 aa).

Positions 29, 77, 164, and 168 each coordinate Mn(2+).

Belongs to the iron/manganese superoxide dismutase family. As to quaternary structure, homotetramer. It depends on Mn(2+) as a cofactor.

Its subcellular location is the mitochondrion matrix. It catalyses the reaction 2 superoxide + 2 H(+) = H2O2 + O2. Destroys superoxide anion radicals which are normally produced within the cells and which are toxic to biological systems. In Aspergillus niger, this protein is Superoxide dismutase [Mn], mitochondrial (sodB).